Here is a 160-residue protein sequence, read N- to C-terminus: Nucleotide-binding protein AHA_1129 (160 aa).

It belongs to the YajQ family.

Functionally, nucleotide-binding protein. In Aeromonas hydrophila subsp. hydrophila (strain ATCC 7966 / DSM 30187 / BCRC 13018 / CCUG 14551 / JCM 1027 / KCTC 2358 / NCIMB 9240 / NCTC 8049), this protein is Nucleotide-binding protein AHA_1129.